Consider the following 308-residue polypeptide: Protein doublecortin (308 aa).

One can recognise a Doublecortin 1 domain in the interval 21-104 (ARVILFRNGD…AEPLNTEVIP (84 aa)). Positions 115–167 (EVSDQDDEPKPSKPFVSSVPPPPTPTPTSSSGTTTTSQPTLSASPSVSSAQSP) are disordered. The span at 141–167 (PTSSSGTTTTSQPTLSASPSVSSAQSP) shows a compositional bias: low complexity. The 84-residue stretch at 194–277 (KVIMCFRNGD…GETLNPLDFS (84 aa)) folds into the Doublecortin 2 domain. The interval 282 to 308 (EHVKQKKLQEQQQQASEQQKPQEQEIF) is disordered. A compositionally biased stretch (low complexity) spans 291–300 (EQQQQASEQQ).

As to quaternary structure, interacts with lis1.

The protein resides in the cytoplasm. It is found in the cytoskeleton. Its function is as follows. Has a cytoskeleton-independent function in chemotactic signaling during development. The polypeptide is Protein doublecortin (dcx) (Dictyostelium discoideum (Social amoeba)).